The primary structure comprises 74 residues: Conotoxin TsMLCL-04 (74 aa).

An N-terminal signal peptide occupies residues methionine 1–proline 19. The propeptide occupies asparagine 20–lysine 60.

Belongs to the conotoxin T superfamily. In terms of processing, contains 2 disulfide bonds that can be either 'C1-C3, C2-C4' or 'C1-C4, C2-C3', since these disulfide connectivities have been observed for conotoxins with cysteine framework V (for examples, see AC P0DQQ7 and AC P81755). In terms of tissue distribution, expressed by the venom duct.

The protein localises to the secreted. The sequence is that of Conotoxin TsMLCL-04 from Conus tessulatus (Tessellate cone).